Reading from the N-terminus, the 254-residue chain is Insulin-like growth factor-binding protein 4 (254 aa).

A signal peptide spans 1–21; it reads MLPFGLVAALLLAAGPRPSLG. Residues 23–103 form the IGFBP N-terminal domain; it reads EAIHCPPCSE…MHGQGVCTEL (81 aa). Cystine bridges form between Cys-27-Cys-53, Cys-30-Cys-55, Cys-38-Cys-56, Cys-44-Cys-59, Cys-67-Cys-80, and Cys-74-Cys-100. Residue Asn-125 is glycosylated (N-linked (GlcNAc...) asparagine). Cys-131 and Cys-138 are oxidised to a cystine. The segment at 149–169 is disordered; the sequence is RSKMKVVGTPREEPRPVPQGS. Residues 167–245 enclose the Thyroglobulin type-1 domain; it reads QGSCQSELHR…GLEPKGELDC (79 aa). Cystine bridges form between Cys-170-Cys-200, Cys-211-Cys-222, and Cys-224-Cys-245. A Phosphoserine modification is found at Ser-251.

Binds IGF2 more than IGF1.

It is found in the secreted. IGF-binding proteins prolong the half-life of the IGFs and have been shown to either inhibit or stimulate the growth promoting effects of the IGFs on cell culture. They alter the interaction of IGFs with their cell surface receptors. The protein is Insulin-like growth factor-binding protein 4 (Igfbp4) of Rattus norvegicus (Rat).